The primary structure comprises 342 residues: Histidinol-phosphate aminotransferase 2 (342 aa).

N6-(pyridoxal phosphate)lysine is present on Lys-206.

The protein belongs to the class-II pyridoxal-phosphate-dependent aminotransferase family. Histidinol-phosphate aminotransferase subfamily. The cofactor is pyridoxal 5'-phosphate.

The catalysed reaction is L-histidinol phosphate + 2-oxoglutarate = 3-(imidazol-4-yl)-2-oxopropyl phosphate + L-glutamate. Its pathway is amino-acid biosynthesis; L-histidine biosynthesis; L-histidine from 5-phospho-alpha-D-ribose 1-diphosphate: step 7/9. This Archaeoglobus fulgidus (strain ATCC 49558 / DSM 4304 / JCM 9628 / NBRC 100126 / VC-16) protein is Histidinol-phosphate aminotransferase 2 (hisC2).